The chain runs to 365 residues: Protein-glutamate methylesterase/protein-glutamine glutaminase (365 aa).

The 118-residue stretch at 5–122 (KVLIVDDSAF…SLDIRKIGEK (118 aa)) folds into the Response regulatory domain. Asp-56 bears the 4-aspartylphosphate mark. Residues 146–155 (IKKEKQDESS) are compositionally biased toward basic and acidic residues. Residues 146-167 (IKKEKQDESSTPKPQVEKTSGL) are disordered. Residues 156 to 167 (TPKPQVEKTSGL) show a composition bias toward polar residues. In terms of domain architecture, CheB-type methylesterase spans 177 to 363 (ILIGSSTGGP…LEIIKFAKKI (187 aa)). Residues Ser-182, His-208, and Asp-305 contribute to the active site.

Belongs to the CheB family. In terms of processing, phosphorylated by CheA. Phosphorylation of the N-terminal regulatory domain activates the methylesterase activity.

It localises to the cytoplasm. It catalyses the reaction [protein]-L-glutamate 5-O-methyl ester + H2O = L-glutamyl-[protein] + methanol + H(+). It carries out the reaction L-glutaminyl-[protein] + H2O = L-glutamyl-[protein] + NH4(+). Involved in chemotaxis. Part of a chemotaxis signal transduction system that modulates chemotaxis in response to various stimuli. Catalyzes the demethylation of specific methylglutamate residues introduced into the chemoreceptors (methyl-accepting chemotaxis proteins or MCP) by CheR. Also mediates the irreversible deamidation of specific glutamine residues to glutamic acid. In Methanococcus maripaludis (strain DSM 14266 / JCM 13030 / NBRC 101832 / S2 / LL), this protein is Protein-glutamate methylesterase/protein-glutamine glutaminase.